The primary structure comprises 283 residues: Phosphatidylglycerol--prolipoprotein diacylglyceryl transferase (283 aa).

Transmembrane regions (helical) follow at residues 21–41 (LAVR…LWLA), 60–80 (LLFA…VLFY), 95–115 (VWTG…AMLW), 124–144 (FFTI…AGRL), 176–196 (SQLY…NWFI), 203–223 (GAVS…VEYV), and 239–259 (MGQI…LWAF). Arginine 143 is a binding site for a 1,2-diacyl-sn-glycero-3-phospho-(1'-sn-glycerol).

Belongs to the Lgt family.

The protein localises to the cell inner membrane. It carries out the reaction L-cysteinyl-[prolipoprotein] + a 1,2-diacyl-sn-glycero-3-phospho-(1'-sn-glycerol) = an S-1,2-diacyl-sn-glyceryl-L-cysteinyl-[prolipoprotein] + sn-glycerol 1-phosphate + H(+). The protein operates within protein modification; lipoprotein biosynthesis (diacylglyceryl transfer). In terms of biological role, catalyzes the transfer of the diacylglyceryl group from phosphatidylglycerol to the sulfhydryl group of the N-terminal cysteine of a prolipoprotein, the first step in the formation of mature lipoproteins. The sequence is that of Phosphatidylglycerol--prolipoprotein diacylglyceryl transferase from Aliivibrio fischeri (strain MJ11) (Vibrio fischeri).